Consider the following 447-residue polypeptide: UDP-N-acetylglucosamine 1-carboxyvinyltransferase (447 aa).

Phosphoenolpyruvate is bound at residue K27–N28. R97 serves as a coordination point for UDP-N-acetyl-alpha-D-glucosamine. C121 serves as the catalytic Proton donor. Position 121 is a 2-(S-cysteinyl)pyruvic acid O-phosphothioketal (C121). Residues R126 to L130, D314, and V336 each bind UDP-N-acetyl-alpha-D-glucosamine.

The protein belongs to the EPSP synthase family. MurA subfamily.

Its subcellular location is the cytoplasm. The enzyme catalyses phosphoenolpyruvate + UDP-N-acetyl-alpha-D-glucosamine = UDP-N-acetyl-3-O-(1-carboxyvinyl)-alpha-D-glucosamine + phosphate. Its pathway is cell wall biogenesis; peptidoglycan biosynthesis. In terms of biological role, cell wall formation. Adds enolpyruvyl to UDP-N-acetylglucosamine. The sequence is that of UDP-N-acetylglucosamine 1-carboxyvinyltransferase from Nostoc sp. (strain PCC 7120 / SAG 25.82 / UTEX 2576).